A 631-amino-acid polypeptide reads, in one-letter code: Nucleoside triphosphatase I (631 aa).

A Helicase ATP-binding domain is found at 42–204; the sequence is FLGLDSMHSL…TMLVNLLRPG (163 aa). Position 55–62 (55–62) interacts with ATP; that stretch reads HETGVGKT. The DEXH box motif lies at 141–144; it reads DECH. The Helicase C-terminal domain occupies 367–532; that stretch reads KFIDVCLGIL…EFVQLFRVFK (166 aa). The interval 457–524 is binding to the cap-specific mRNA (nucleoside-2'-O-)-methyltransferase; that stretch reads DIFILDMTWN…EIIQSKSKEF (68 aa).

It belongs to the helicase family. NPH I subfamily. Monomer. Interacts (via C-terminus) with RAP94/OPG109 (via N-terminus). Interacts with the cap-specific mRNA (nucleoside-2'-O-)-methyltransferase OPG102.

It localises to the virion. It carries out the reaction a ribonucleoside 5'-triphosphate + H2O = a ribonucleoside 5'-diphosphate + phosphate + H(+). DNA-dependent ATPase that acts as a 5' to 3' translocase on single-stranded DNA and thereby plays a role in transcription termination of viral early genes. Uses forward translocation in concert with the viral RNA polymerase RAP94/OPG109 subunit and the capping enzyme/VTF to catalyze release of UUUUUNU-containing nascent RNA from the elongation complex. In addition, acts as a positive elongation factor to assist transcription through problematic sequences. The polypeptide is Nucleoside triphosphatase I (OPG123) (Vaccinia virus (strain Copenhagen) (VACV)).